Here is a 614-residue protein sequence, read N- to C-terminus: Sulfite reductase [NADPH] flavoprotein alpha-component (614 aa).

The Flavodoxin-like domain maps to 79-217 (LTIIFASQTG…AATEWRKQVL (139 aa)). FMN-binding positions include 85 to 90 (SQTGNA), 132 to 135 (STNG), and 168 to 177 (LGDSSYQFFC). The region spanning 249-463 (EQPYTASLST…VEHNNNFKLP (215 aa)) is the FAD-binding FR-type domain. Residues threonine 337, threonine 371, 401-404 (RLYS), 419-421 (TVG), tyrosine 425, and 434-437 (GGAS) contribute to the FAD site. NADP(+) is bound by residues 534 to 535 (SR), 540 to 544 (KVYVQ), and aspartate 576. Tyrosine 614 is an FAD binding site.

This sequence belongs to the NADPH-dependent sulphite reductase flavoprotein subunit CysJ family. It in the N-terminal section; belongs to the flavodoxin family. In the C-terminal section; belongs to the flavoprotein pyridine nucleotide cytochrome reductase family. In terms of assembly, alpha(8)-beta(8). The alpha component is a flavoprotein, the beta component is a hemoprotein. FAD is required as a cofactor. It depends on FMN as a cofactor.

The enzyme catalyses hydrogen sulfide + 3 NADP(+) + 3 H2O = sulfite + 3 NADPH + 4 H(+). It functions in the pathway sulfur metabolism; hydrogen sulfide biosynthesis; hydrogen sulfide from sulfite (NADPH route): step 1/1. Its function is as follows. Component of the sulfite reductase complex that catalyzes the 6-electron reduction of sulfite to sulfide. This is one of several activities required for the biosynthesis of L-cysteine from sulfate. The flavoprotein component catalyzes the electron flow from NADPH -&gt; FAD -&gt; FMN to the hemoprotein component. In Vibrio cholerae serotype O1 (strain ATCC 39315 / El Tor Inaba N16961), this protein is Sulfite reductase [NADPH] flavoprotein alpha-component.